The sequence spans 179 residues: Large ribosomal subunit protein uL22c (179 aa).

Belongs to the universal ribosomal protein uL22 family. As to quaternary structure, part of the 50S ribosomal subunit.

It is found in the plastid. The protein resides in the chloroplast. Functionally, this protein binds specifically to 23S rRNA. The globular domain of the protein is located near the polypeptide exit tunnel on the outside of the subunit, while an extended beta-hairpin is found that lines the wall of the exit tunnel in the center of the 70S ribosome. The polypeptide is Large ribosomal subunit protein uL22c (rpl22) (Ranunculus macranthus (Large buttercup)).